Consider the following 95-residue polypeptide: Small ubiquitin-related modifier 2-B (95 aa).

Lysine 11 participates in a covalent cross-link: Glycyl lysine isopeptide (Lys-Gly) (interchain with G-Cter in SUMO). A Ubiquitin-like domain is found at 16-95; it reads DHINLKVAGQ…VFQQQTGGSY (80 aa). Glycine 93 participates in a covalent cross-link: Glycyl lysine isopeptide (Gly-Lys) (interchain with K-? in acceptor proteins). Residues 94 to 95 constitute a propeptide that is removed on maturation; it reads SY.

It belongs to the ubiquitin family. SUMO subfamily. As to quaternary structure, interacts with sae2 and ube2i. Covalently attached to a number of proteins, including top2. In terms of processing, polymeric chains can be formed through Lys-11 cross-linking. Cleavage of precursor form by a sentrin-specific protease is necessary for function.

The protein localises to the nucleus. In terms of biological role, ubiquitin-like protein that can be covalently attached to proteins as a monomer or as a lysine-linked polymer. Covalent attachment via an isopeptide bond to its substrates requires prior activation by the E1 complex sae1-sae2 and linkage to the E2 enzyme ube2i, and can be promoted by an E3 ligase such as pias1-4. This post-translational modification on lysine residues of proteins plays a crucial role in a number of cellular processes such as nuclear transport, DNA replication and repair, mitosis and signal transduction. Polymeric sumo2 chains are also susceptible to polyubiquitination which functions as a signal for proteasomal degradation of modified proteins. This chain is Small ubiquitin-related modifier 2-B (sumo2-b), found in Xenopus laevis (African clawed frog).